The sequence spans 406 residues: MQQTSNSNRTMMSFRRFTTTKLQLSHWDFTIYDTYIKMTNIHHITTTSNDSCLPTCPPLAEILKDKIPGYAFYSSAWQCQTMWMRFLIFGDEDNCIKTQLMFIDRSAENINIRLQHASYQMAPAHSLVFYIFPIILLRLDGLYLRVLPDKHPGVMDASCSQTWSCLNTPMPVVRLQGGMLSWDDEDMPFMLGQKTKPFLSKAVKVHALADEVCKVNDVCMGDNYMKIHLDFHFALDKHLPVDICMSPTNNTVLSFKFNPFVKTPWEPTPAKVPIVYMGEPVLIPGSCSTIVEYCNRYYVAKGLRITAIIVSVETDDTEFETDVCEWASECTAKIMVSNKSLFPRTLAPGTHIANAHFLLAERHFFSRILSDKNLKKLSTCIKLPGGFWVNAAKLPKLCKTCLSERV.

This is an uncharacterized protein from Connochaetes taurinus (Blue wildebeest).